The following is a 176-amino-acid chain: DNA repair RAD52-like protein 1, mitochondrial (176 aa).

The transit peptide at 1–37 directs the protein to the mitochondrion; sequence MAGLGLRLKAAKWTLRSGSGAVSREWSSEMGKGVRRF.

Belongs to the RAD52 family. As to quaternary structure, interacts with WHY2. Expressed in root vascular tissue, tips of primary and secondary roots, young leaves, hydathodes, stomatal guard cells, cauline leaves, flower buds, stipules, carpels, pistils and anther filaments.

The protein localises to the mitochondrion. It is found in the nucleus. Functionally, plant-specific single-stranded DNA-binding protein required for efficient heterologous recombination-dependent DNA repair in nuclear and mitochondrial compartments. Forms large nucleo-protein complexes with WHY2 in mitochondria. Binds ssDNA with high affinity, but with little sequence specificity. Involved in double-stranded DNA break repair. Involved in the hydrolytic splicing pathway in mitochondrion. Facilitates the excision of two cis-spliced group II introns, NAD1 intron 2 and NAD2 intron 1. This is DNA repair RAD52-like protein 1, mitochondrial from Arabidopsis thaliana (Mouse-ear cress).